Here is a 442-residue protein sequence, read N- to C-terminus: DNA topoisomerase 6 subunit A3 (442 aa).

The disordered stretch occupies residues 1–34; sequence MSEKKRRGGAGAGAASGSASKKPRVSTAASYAES. Residues 91 to 224 enclose the Topo IIA-type catalytic domain; sequence QDSASVTSRI…LHVVASEKGV (134 aa). The O-(5'-phospho-DNA)-tyrosine intermediate role is filled by Tyr-185. Positions 271 and 323 each coordinate Mg(2+).

Belongs to the TOP6A family. In terms of assembly, homodimer. Heterotetramer of two TOP6A and two TOP6B subunits. Interacts with TOP6B. It depends on Mg(2+) as a cofactor. In terms of tissue distribution, highly expressed in flowers before pollination. Expressed in roots and shoots.

It localises to the nucleus. It carries out the reaction ATP-dependent breakage, passage and rejoining of double-stranded DNA.. In terms of biological role, component of the DNA topoisomerase VI involved in chromatin organization and progression of endoreduplication cycles. Relaxes both positive and negative superturns and exhibits a strong decatenase activity. May be involved in cell proliferation and stress tolerance. The chain is DNA topoisomerase 6 subunit A3 from Oryza sativa subsp. indica (Rice).